The chain runs to 96 residues: ESAT-6-like protein EsxR (96 aa).

The protein belongs to the WXG100 family. ESAT-6 subfamily.

The protein resides in the secreted. The polypeptide is ESAT-6-like protein EsxR (Mycobacterium bovis (strain ATCC BAA-935 / AF2122/97)).